A 238-amino-acid polypeptide reads, in one-letter code: Ribonuclease PH (238 aa).

Phosphate is bound by residues Arg-86 and Gly-124–Arg-126.

The protein belongs to the RNase PH family. In terms of assembly, homohexameric ring arranged as a trimer of dimers.

It catalyses the reaction tRNA(n+1) + phosphate = tRNA(n) + a ribonucleoside 5'-diphosphate. In terms of biological role, phosphorolytic 3'-5' exoribonuclease that plays an important role in tRNA 3'-end maturation. Removes nucleotide residues following the 3'-CCA terminus of tRNAs; can also add nucleotides to the ends of RNA molecules by using nucleoside diphosphates as substrates, but this may not be physiologically important. Probably plays a role in initiation of 16S rRNA degradation (leading to ribosome degradation) during starvation. This is Ribonuclease PH from Vibrio parahaemolyticus serotype O3:K6 (strain RIMD 2210633).